A 276-amino-acid polypeptide reads, in one-letter code: Acetyl-coenzyme A carboxylase carboxyl transferase subunit beta (276 aa).

The CoA carboxyltransferase N-terminal domain maps to 24–276; it reads LWRECSNCHE…NNLLNLHSDK (253 aa). Positions 28, 31, 46, and 49 each coordinate Zn(2+). The C4-type zinc finger occupies 28-49; it reads CSNCHEKFYYRRAGVYEVCPNC.

Belongs to the AccD/PCCB family. In terms of assembly, acetyl-CoA carboxylase is a heterohexamer composed of biotin carboxyl carrier protein (AccB), biotin carboxylase (AccC) and two subunits each of ACCase subunit alpha (AccA) and ACCase subunit beta (AccD). Requires Zn(2+) as cofactor.

It localises to the cytoplasm. It carries out the reaction N(6)-carboxybiotinyl-L-lysyl-[protein] + acetyl-CoA = N(6)-biotinyl-L-lysyl-[protein] + malonyl-CoA. The protein operates within lipid metabolism; malonyl-CoA biosynthesis; malonyl-CoA from acetyl-CoA: step 1/1. Functionally, component of the acetyl coenzyme A carboxylase (ACC) complex. Biotin carboxylase (BC) catalyzes the carboxylation of biotin on its carrier protein (BCCP) and then the CO(2) group is transferred by the transcarboxylase to acetyl-CoA to form malonyl-CoA. The protein is Acetyl-coenzyme A carboxylase carboxyl transferase subunit beta of Pediococcus pentosaceus (strain ATCC 25745 / CCUG 21536 / LMG 10740 / 183-1w).